We begin with the raw amino-acid sequence, 84 residues long: MKTLLLTLVVVTIVCLDLGNSLICYNTMMQKVTCPEGKDKCEKYAVPVMRGKFYFSYQCTSKCHEGAYDVCCSTDLCNKSSTSG.

An N-terminal signal peptide occupies residues 1–21 (MKTLLLTLVVVTIVCLDLGNS). 4 cysteine pairs are disulfide-bonded: cysteine 24–cysteine 41, cysteine 34–cysteine 59, cysteine 63–cysteine 71, and cysteine 72–cysteine 77. Residue asparagine 78 is glycosylated (N-linked (GlcNAc...) asparagine).

Belongs to the three-finger toxin family. Short-chain subfamily. Expressed by the venom gland.

It localises to the secreted. The chain is Three-finger toxin 3FTx-1 from Micrurus corallinus (Brazilian coral snake).